The sequence spans 631 residues: MSHWAPEWKRAEANPRDLGASWDVRGSRGSGWSGPFGHQGPRAAGSREPPLCFKIKNNMVGVVIGYSGSKIKDLQHSTNTKIQIINGESEAKVRIFGNREMKAKAKAAIETLIRKQESYNSESSVDNAASQTPIGRNLGRNDIVGEAEPLSNWDRIRAAVVECEKRKWADLPPVKKNFYIESKATSCMSEMQVINWRKENFNITCDDLKSGEKRLIPKPTCRFKDAFQQYPDLLKSIIRVGIVKPTPIQSQAWPIILQGIDLIVVAQTGTGKTLSYLMPGFIHLDSQPISREQRNGPGMLVLTPTRELALHVEAECSKYSYKGLKSICIYGGRNRNGQIEDISKGVDIIIATPGRLNDLQMNNSVNLRSITYLVIDEADKMLDMEFEPQIRKILLDVRPDRQTVMTSATWPDTVRQLALSYLKDPMIVYVGNLNLVAVNTVKQNIIVTTEKEKRALTQEFVENMSPNDKVIMFVSQKHIADDLSSDFNIQGISAESLHGNSEQSDQERAVEDFKSGNIKILITTDIVSRGLDLNDVTHVYNYDFPRNIDVYVHRVGYIGRTGKTGTSVTLITQRDSKMAGELIKILDRANQSVPEDLVVMAEQYKLNQQKRHRETRSRKPGQRRKEFYFLS.

The KH domain occupies 48–109 (EPPLCFKIKN…EMKAKAKAAI (62 aa)). The Q motif signature appears at 222–250 (RFKDAFQQYPDLLKSIIRVGIVKPTPIQS). Residues Lys244, Gln249, 268–273 (TGTGKT), and His311 each bind ATP. The region spanning 253-428 (WPIILQGIDL…LSYLKDPMIV (176 aa)) is the Helicase ATP-binding domain. A DEAD box motif is present at residues 376–379 (DEAD). Residues 440–601 (TVKQNIIVTT…SVPEDLVVMA (162 aa)) enclose the Helicase C-terminal domain.

The protein belongs to the DEAD box helicase family. As to expression, expressed in testis. Wide expression in various cancer tissues and cancer cell lines.

It localises to the nucleus. The enzyme catalyses ATP + H2O = ADP + phosphate + H(+). The chain is Probable ATP-dependent RNA helicase DDX53 (DDX53) from Homo sapiens (Human).